The following is a 271-amino-acid chain: Putative phosphoenolpyruvate synthase regulatory protein (271 aa).

Position 152-159 (Gly-152–Thr-159) interacts with ADP.

Belongs to the pyruvate, phosphate/water dikinase regulatory protein family. PSRP subfamily.

The catalysed reaction is [pyruvate, water dikinase] + ADP = [pyruvate, water dikinase]-phosphate + AMP + H(+). The enzyme catalyses [pyruvate, water dikinase]-phosphate + phosphate + H(+) = [pyruvate, water dikinase] + diphosphate. Functionally, bifunctional serine/threonine kinase and phosphorylase involved in the regulation of the phosphoenolpyruvate synthase (PEPS) by catalyzing its phosphorylation/dephosphorylation. The chain is Putative phosphoenolpyruvate synthase regulatory protein from Thiocapsa roseopersicina.